The chain runs to 96 residues: Large ribosomal subunit protein bL21 (96 aa).

The protein belongs to the bacterial ribosomal protein bL21 family. Part of the 50S ribosomal subunit. Contacts protein L20.

Its function is as follows. This protein binds to 23S rRNA in the presence of protein L20. This is Large ribosomal subunit protein bL21 from Sulfurihydrogenibium sp. (strain YO3AOP1).